Here is a 329-residue protein sequence, read N- to C-terminus: Olfactory receptor 5AL1 (329 aa).

Topologically, residues 1-44 (MCALKGFLEENFYTYSVAKGNHSTVYEFILLGLTDNAELQVTLF) are extracellular. A glycan (N-linked (GlcNAc...) asparagine) is linked at Asn-21. A helical membrane pass occupies residues 45–65 (GIFLVVYLASFMGNFGLIMLI). Over 66–73 (QISPQLHT) the chain is Cytoplasmic. A helical membrane pass occupies residues 74 to 94 (PMYFFLSHLAFVDFSFTSSVA). Residues 95–113 (PNTLVNFLCEVKSITFYAC) are Extracellular-facing. Residues Cys-113 and Cys-205 are joined by a disulfide bond. A helical transmembrane segment spans residues 114–134 (AIQVCCFITFVVCELYLLSIM). Topologically, residues 135–157 (AYDRYVAICNPLLYVILIPRKLC) are cytoplasmic. A helical transmembrane segment spans residues 158–178 (IKLIASTYVYGFTVGLVQTVA). Over 179-220 (TSYLSFCDSNVINHFYHDDVPLVALACSDTHVKELMLLIIAG) the chain is Extracellular. A helical membrane pass occupies residues 221–241 (FNTLCSLVIVLISYGFIFFAI). The Cytoplasmic portion of the chain corresponds to 242–253 (LRIHSAEGRQKA). Residues 254–274 (FSTSASHLTSITIFYGTIIFM) form a helical membrane-spanning segment. Over 275–287 (YPQPKSSHSLNMD) the chain is Extracellular. The helical transmembrane segment at 288-308 (KVASVFNVVVIPTLNPLIYSL) threads the bilayer. Topologically, residues 309–329 (RNQEVKNALKRIIEKLCLAVK) are cytoplasmic.

Belongs to the G-protein coupled receptor 1 family.

The protein localises to the cell membrane. Odorant receptor. The polypeptide is Olfactory receptor 5AL1 (OR5AL1) (Homo sapiens (Human)).